Here is a 406-residue protein sequence, read N- to C-terminus: 26S proteasome regulatory subunit 8 (406 aa).

Ala2 is subject to N-acetylalanine. At Ser120 the chain carries Phosphoserine. The may mediate interaction with PRPF9 stretch occupies residues 186–406 (VLLYGPPGTG…KNMSIKKLWK (221 aa)). 190-197 (GPPGTGKT) contacts ATP. Residue Lys222 is modified to N6-acetyllysine.

The protein belongs to the AAA ATPase family. Component of the 19S proteasome regulatory particle complex. The 26S proteasome consists of a 20S core particle (CP) and two 19S regulatory subunits (RP). The regulatory particle is made of a lid composed of 9 subunits, a base containing 6 ATPases including PSMC5 and few additional components. Component of a complex with USP49 and RUVBL1. Interacts with PRPF19. Interacts with TRIM5. Interacts with NDC80. Interacts with PAAF1. Interacts, in vitro, with the thyroid hormone receptor (in a thyroid hormone T3-dependent manner) and with retinoid X receptor (RXR). Interacts with ERCC6.

The protein resides in the cytoplasm. It localises to the nucleus. Functionally, component of the 26S proteasome, a multiprotein complex involved in the ATP-dependent degradation of ubiquitinated proteins. This complex plays a key role in the maintenance of protein homeostasis by removing misfolded or damaged proteins, which could impair cellular functions, and by removing proteins whose functions are no longer required. Therefore, the proteasome participates in numerous cellular processes, including cell cycle progression, apoptosis, or DNA damage repair. PSMC5 belongs to the heterohexameric ring of AAA (ATPases associated with diverse cellular activities) proteins that unfolds ubiquitinated target proteins that are concurrently translocated into a proteolytic chamber and degraded into peptides. This is 26S proteasome regulatory subunit 8 (PSMC5) from Bos taurus (Bovine).